We begin with the raw amino-acid sequence, 110 residues long: UPF0122 protein SMU_1061 (110 aa).

This sequence belongs to the UPF0122 family.

Its function is as follows. Might take part in the signal recognition particle (SRP) pathway. This is inferred from the conservation of its genetic proximity to ftsY/ffh. May be a regulatory protein. This chain is UPF0122 protein SMU_1061 (ylxM), found in Streptococcus mutans serotype c (strain ATCC 700610 / UA159).